A 570-amino-acid polypeptide reads, in one-letter code: Sulfite reductase [NADPH] hemoprotein beta-component (570 aa).

The [4Fe-4S] cluster site is built by cysteine 434, cysteine 440, cysteine 479, and cysteine 483. Siroheme is bound at residue cysteine 483.

Belongs to the nitrite and sulfite reductase 4Fe-4S domain family. In terms of assembly, alpha(8)-beta(8). The alpha component is a flavoprotein, the beta component is a hemoprotein. Siroheme serves as cofactor. Requires [4Fe-4S] cluster as cofactor.

It carries out the reaction hydrogen sulfide + 3 NADP(+) + 3 H2O = sulfite + 3 NADPH + 4 H(+). It participates in sulfur metabolism; hydrogen sulfide biosynthesis; hydrogen sulfide from sulfite (NADPH route): step 1/1. Functionally, component of the sulfite reductase complex that catalyzes the 6-electron reduction of sulfite to sulfide. This is one of several activities required for the biosynthesis of L-cysteine from sulfate. The sequence is that of Sulfite reductase [NADPH] hemoprotein beta-component from Escherichia coli O9:H4 (strain HS).